The following is a 715-amino-acid chain: Beta-galactosidase 9 (715 aa).

Positions 1 to 20 (MSGGAVAFLLLVAAAAVANA) are cleaved as a signal peptide. Glu-178 (proton donor) is an active-site residue. Residue Glu-247 is the Nucleophile of the active site.

It belongs to the glycosyl hydrolase 35 family.

Its subcellular location is the secreted. The protein resides in the extracellular space. The protein localises to the apoplast. It carries out the reaction Hydrolysis of terminal non-reducing beta-D-galactose residues in beta-D-galactosides.. The polypeptide is Beta-galactosidase 9 (Oryza sativa subsp. japonica (Rice)).